The sequence spans 1098 residues: Trehalose synthase complex regulatory subunit TSL1 (1098 aa).

Residues Ser49, Ser53, Ser56, Ser71, Ser77, Ser135, Ser147, and Ser161 each carry the phosphoserine modification. 3 disordered regions span residues 59 to 86 (APAP…RASS), 129 to 168 (SVER…QQQQ), and 192 to 244 (SQTS…PSIK). Positions 72-86 (RSATRSPSAFNRASS) are enriched in polar residues. 2 tandem repeats follow at residues 144-150 (RIASPIQ) and 158-164 (RIASPIQ). The segment at 144–164 (RIASPIQHEHDSGSRIASPIQ) is 2 X 7 AA repeats of R-I-A-S-P-I-Q. Over residues 213-227 (RPTSAATSLVNRTKQ) the composition is skewed to polar residues. The span at 228 to 242 (GSASSGSSGSSAPPS) shows a compositional bias: low complexity. Ser229 bears the Phosphoserine mark. At Thr251 the chain carries Phosphothreonine. The tract at residues 274-297 (ADISSSETSSQHNESDPDDLTTAP) is disordered. Ser303 is modified (phosphoserine). Residues 320–812 (GGYSNKSKLK…FNQEGSKIFK (493 aa)) form a TPS complex domain region. The residue at position 815 (Thr815) is a Phosphothreonine. Residues 1000 to 1027 (SSGQITNIQTPSQQNPSDQEQQPPASPT) form a disordered region.

This sequence in the C-terminal section; belongs to the glycosyltransferase 20 family. In terms of assembly, the trehalose synthase complex is composed of the two catalytic subunits TPS1 and TPS2, and at least one of the two regulatory subunits TPS3 or TSL1.

Its subcellular location is the cytoplasm. Regulatory subunit of the trehalose synthase complex that catalyzes the production of trehalose from glucose-6-phosphate and UDP-glucose in a two step process. May stabilize the trehalose synthase complex, and confer sensitivity to physiological concentrations of phosphate and to fructose 6-phosphate. The chain is Trehalose synthase complex regulatory subunit TSL1 (TSL1) from Saccharomyces cerevisiae (strain ATCC 204508 / S288c) (Baker's yeast).